A 129-amino-acid chain; its full sequence is D-ribose pyranase (129 aa).

The Proton donor role is filled by His20. Substrate contacts are provided by residues Asp28, His96, and 118–120 (YAN).

It belongs to the RbsD / FucU family. RbsD subfamily. Homodecamer.

It is found in the cytoplasm. The enzyme catalyses beta-D-ribopyranose = beta-D-ribofuranose. The protein operates within carbohydrate metabolism; D-ribose degradation; D-ribose 5-phosphate from beta-D-ribopyranose: step 1/2. Its function is as follows. Catalyzes the interconversion of beta-pyran and beta-furan forms of D-ribose. This chain is D-ribose pyranase, found in Exiguobacterium sp. (strain ATCC BAA-1283 / AT1b).